We begin with the raw amino-acid sequence, 546 residues long: Hexose transporter HXT10 (546 aa).

Topologically, residues 1–44 (MVSSSVSILGTSAKASTSLSRKDEIKLTPETREASLDIPYKPII) are cytoplasmic. Residues 45 to 65 (AYWTVMGLCLMIAFGGFIFGW) traverse the membrane as a helical segment. The Extracellular portion of the chain corresponds to 66–100 (DTGTISGFINQTDFKRRFGELQRDGSFQLSDVRTG). N-linked (GlcNAc...) asparagine glycosylation occurs at Asn75. A helical membrane pass occupies residues 101–121 (LIVGIFNIGCALGGLTLGRLG). The Cytoplasmic portion of the chain corresponds to 122 to 127 (DIYGRK). Residues 128 to 148 (IGLMCVILVYVVGIVIQIASS) form a helical membrane-spanning segment. Topologically, residues 149–158 (DKWYQYFIGR) are extracellular. A helical membrane pass occupies residues 159–179 (IVSGMGVGGVAVLSPTLISEI). The Cytoplasmic portion of the chain corresponds to 180–185 (SPKHLR). The chain crosses the membrane as a helical span at residues 186–206 (GTCVSFYQLMITLGIFLGYCT). The Extracellular portion of the chain corresponds to 207–220 (NYGTKKYSNSIQWR). The chain crosses the membrane as a helical span at residues 221–241 (VPLGLCFAWAIFMVIGMVMVP). Over 242–324 (ESPRYLVEKG…IQSLQQLTGC (83 aa)) the chain is Cytoplasmic. Residues 325-341 (NYFFYYGTTIFNAVGMQ) form a helical membrane-spanning segment. Over 342–347 (DSFETS) the chain is Extracellular. Residues 348-365 (IVLGAVNFASTFVALYIV) form a helical membrane-spanning segment. Over 366–372 (DKFGRRK) the chain is Cytoplasmic. Residues 373–393 (CLLWGSASMAICFVIFATVGV) form a helical membrane-spanning segment. At 394-415 (TRLWPQGKDQPSSQSAGNVMIV) the chain is on the extracellular side. Residues 416–436 (FTCFFIFSFAITWAPIAYVIV) traverse the membrane as a helical segment. Residues 437-453 (AETYPLRVKNRAMAIAV) are Cytoplasmic-facing. Residues 454 to 474 (GANWMWGFLIGFFTPFITRSI) form a helical membrane-spanning segment. Gly475 is a topological domain (extracellular). A helical membrane pass occupies residues 476-496 (FSYGYVFMGCLIFSYFYVFFF). Residues 497-546 (VCETKGLTLEEVNEMYEERIKPWKSGGWIPSSRRTPQPTSSTPLVIVDSK) lie on the Cytoplasmic side of the membrane.

Belongs to the major facilitator superfamily. Sugar transporter (TC 2.A.1.1) family.

It localises to the membrane. In terms of biological role, probable glucose transporter. This Saccharomyces cerevisiae (strain ATCC 204508 / S288c) (Baker's yeast) protein is Hexose transporter HXT10 (HXT10).